A 378-amino-acid chain; its full sequence is POU domain, class 3, transcription factor 2 (378 aa).

Disordered regions lie at residues 1-28 (MATT…SMQQ), 86-118 (SPRD…HDSR), and 151-205 (LIPG…TPTS). A compositionally biased stretch (basic and acidic residues) spans 164 to 181 (MRDAHEDHHSPHLSDHGH). Positions 200-274 (EDTPTSDDLE…LLNKWLEEAD (75 aa)) constitute a POU-specific domain. A Phosphoserine modification is found at serine 279. Residues 292 to 351 (KRKKRTSIEVSVKGALESHFLKCPKPAASEITSLADSLQLEKEVVRVWFCNRRQKEKRMT) constitute a DNA-binding region (homeobox). The interval 347-378 (EKRMTPPGGPLPGTEDVYGDTPPHHGVQTPVQ) is disordered.

Belongs to the POU transcription factor family. Class-3 subfamily. In terms of tissue distribution, predominantly expressed in the central nervous system, with strong expression in the cerebellum.

The protein resides in the nucleus. Functionally, transcription factor that may play important roles in patterning the embryonic brain. This chain is POU domain, class 3, transcription factor 2 (pou3f2), found in Danio rerio (Zebrafish).